A 116-amino-acid chain; its full sequence is Large ribosomal subunit protein bL17 (116 aa).

It belongs to the bacterial ribosomal protein bL17 family. In terms of assembly, part of the 50S ribosomal subunit. Contacts protein L32.

The protein is Large ribosomal subunit protein bL17 of Helicobacter acinonychis (strain Sheeba).